Consider the following 529-residue polypeptide: BAR/IMD domain-containing adapter protein 2-like 2 (529 aa).

The IMD domain occupies 1-239; that stretch reads MAPEMDQFYR…HSPGLLGPAL (239 aa). Disordered stretches follow at residues 221–327 and 403–510; these read EASR…GGAR and TSMS…TNPF. Phosphoserine occurs at positions 231, 272, and 302. Over residues 299–313 the composition is skewed to low complexity; that stretch reads SASSLYSGSAQSSRS. The region spanning 324 to 387 is the SH3 domain; sequence GGARRVRALV…PEAYVKALEE (64 aa). 2 stretches are compositionally biased toward low complexity: residues 403 to 413 and 452 to 462; these read TSMSPMTPMNP and RSRTPSRVPSR. A compositionally biased stretch (pro residues) spans 463–472; sequence APSPAPPPLP. Phosphoserine is present on residues Ser478 and Ser481.

Expressed in the epithelial layer of the intestine (at protein level).

Its subcellular location is the cell membrane. It localises to the cell junction. It is found in the cytoplasmic vesicle membrane. Phosphoinositides-binding protein that induces the formation of planar or gently curved membrane structures. Binds to phosphoinositides, including to phosphatidylinositol 4,5-bisphosphate (PtdIns(4,5)P2) headgroups. There seems to be no clear preference for a specific phosphoinositide. This is BAR/IMD domain-containing adapter protein 2-like 2 (BAIAP2L2) from Homo sapiens (Human).